The primary structure comprises 346 residues: DNA primase small subunit PriS (346 aa).

Residues Asp-95 and Asp-97 contribute to the active site. 4 residues coordinate Zn(2+): Cys-106, His-108, Cys-114, and Cys-117. The Zinc knuckle motif signature appears at 106-117 (CEHEPGTVCPIC). Asp-280 is a catalytic residue.

This sequence belongs to the eukaryotic-type primase small subunit family. As to quaternary structure, heterodimer of a small subunit (PriS) and a large subunit (PriL). It depends on Mg(2+) as a cofactor. Requires Mn(2+) as cofactor.

Its function is as follows. Catalytic subunit of DNA primase, an RNA polymerase that catalyzes the synthesis of short RNA molecules used as primers for DNA polymerase during DNA replication. The small subunit contains the primase catalytic core and has DNA synthesis activity on its own. Binding to the large subunit stabilizes and modulates the activity, increasing the rate of DNA synthesis while decreasing the length of the DNA fragments, and conferring RNA synthesis capability. The DNA polymerase activity may enable DNA primase to also catalyze primer extension after primer synthesis. May also play a role in DNA repair. This chain is DNA primase small subunit PriS, found in Pyrococcus horikoshii (strain ATCC 700860 / DSM 12428 / JCM 9974 / NBRC 100139 / OT-3).